A 307-amino-acid polypeptide reads, in one-letter code: N-acetylglucosaminyl-diphospho-decaprenol L-rhamnosyltransferase (307 aa).

This sequence belongs to the glycosyltransferase 2 family. The cofactor is Mn(2+). Mg(2+) is required as a cofactor.

It carries out the reaction N-acetyl-alpha-D-glucosaminyl-1-diphospho-trans,octa-cis-decaprenol + dTDP-beta-L-rhamnose = alpha-L-rhamnosyl-(1-&gt;3)-N-acetyl-alpha-D-glucosaminyl-diphospho-trans,octa-cis-decaprenol + dTDP + H(+). Its function is as follows. Involved in the biosynthesis of the mycolylarabinogalactan-peptidoglycan (mAGP) complex, an essential component of the mycobacterial cell wall. Catalyzes the transfer of the rhamnosyl moiety from dTDP-rhamnosyl (dTDP-Rha) onto the decaprenyl-pyrophosphoryl-GlcNAc (C50-PP-GlcNAc), yielding rhamnosyl-decaprenyl-pyrophosphoryl-GlcNAc (Rha-C50-PP-GlcNAc). This Mycobacterium tuberculosis (strain CDC 1551 / Oshkosh) protein is N-acetylglucosaminyl-diphospho-decaprenol L-rhamnosyltransferase (wbbL).